The following is a 664-amino-acid chain: DNA ligase (664 aa).

Residues 32 to 36 (DKEYD) and 80 to 81 (SL) each bind NAD(+). The active-site N6-AMP-lysine intermediate is lysine 122. Positions 144, 178, and 314 each coordinate NAD(+). The Zn(2+) site is built by cysteine 407, cysteine 410, cysteine 423, and cysteine 429. A BRCT domain is found at 587–664 (IDENPFMDKT…NEEEFSNKIK (78 aa)).

It belongs to the NAD-dependent DNA ligase family. LigA subfamily. Requires Mg(2+) as cofactor. Mn(2+) is required as a cofactor.

It carries out the reaction NAD(+) + (deoxyribonucleotide)n-3'-hydroxyl + 5'-phospho-(deoxyribonucleotide)m = (deoxyribonucleotide)n+m + AMP + beta-nicotinamide D-nucleotide.. In terms of biological role, DNA ligase that catalyzes the formation of phosphodiester linkages between 5'-phosphoryl and 3'-hydroxyl groups in double-stranded DNA using NAD as a coenzyme and as the energy source for the reaction. It is essential for DNA replication and repair of damaged DNA. This is DNA ligase from Clostridium botulinum (strain Loch Maree / Type A3).